The sequence spans 466 residues: MVDVLNIESLDLEARGIAHRDGKVLFVEGALPGERVTVQTVRRKPSYEIAKVEEILRPSSQRVAPRCPHFGVCGGCAMQHLAPAAQVAIKQRALEDTFWHVGKLKPARILPPLYGPTWGYRYRARLSVRVVPKKGGVLVGFHERKSSYVADMRECHVLPPAVSRLLLPLRAMIAAMSAPDRMPQIEVALGDEAIVLVLRHLLPLTDGDIAVLRAFAAEHGVQWWLQSKGPDTVHPLEREHADALAYTLPEFGLRMPYRPTDFTQVNHAINRAMVSRALKLLDVQPQDRVADLFCGLGNFTLPLATQGREAVGVEGSKALTDRAHEAAARHGLGERTRFATLNLFEVDVQWLRGLGYFDRMLIDPPREGAQAVAQALSLLAPGERPRRIVYVSCNPGTLARDAAIMVHEGGYALRSAGVINMFPHTGHVESIAVFESLDEATVLQAQAQARQKAREEAERLAEAAAA.

The TRAM domain occupies 1-54 (MVDVLNIESLDLEARGIAHRDGKVLFVEGALPGERVTVQTVRRKPSYEIAKVEE). Residues cysteine 67, cysteine 73, cysteine 76, and cysteine 155 each coordinate [4Fe-4S] cluster. 6 residues coordinate S-adenosyl-L-methionine: glutamine 264, phenylalanine 293, asparagine 298, glutamate 314, asparagine 342, and aspartate 363. Cysteine 393 serves as the catalytic Nucleophile.

This sequence belongs to the class I-like SAM-binding methyltransferase superfamily. RNA M5U methyltransferase family. RlmD subfamily.

It carries out the reaction uridine(1939) in 23S rRNA + S-adenosyl-L-methionine = 5-methyluridine(1939) in 23S rRNA + S-adenosyl-L-homocysteine + H(+). Catalyzes the formation of 5-methyl-uridine at position 1939 (m5U1939) in 23S rRNA. This chain is 23S rRNA (uracil(1939)-C(5))-methyltransferase RlmD, found in Bordetella bronchiseptica (strain ATCC BAA-588 / NCTC 13252 / RB50) (Alcaligenes bronchisepticus).